Consider the following 161-residue polypeptide: Globin CTT-VIIB-5/CTT-VIIB-9 (161 aa).

Residues 1 to 16 (MKFFAVLALCIVGAIA) form the signal peptide. The 144-residue stretch at 18-161 (PLTADEASLV…NTFAIVVPRL (144 aa)) folds into the Globin domain. His-76 and His-111 together coordinate heme b.

Belongs to the globin family. Homodimer.

The polypeptide is Globin CTT-VIIB-5/CTT-VIIB-9 (CTT-7B5) (Chironomus thummi thummi (Midge)).